Here is a 758-residue protein sequence, read N- to C-terminus: Transmembrane E3 ubiquitin-protein ligase 1 (758 aa).

The first 26 residues, 1–26 (MEIDGNTLVFIIVILFLFFSSPGGDG), serve as a signal peptide directing secretion. Residues 27 to 398 (VSSQYEFNQL…YELKIMSIRK (372 aa)) are Lumenal-facing. Residues 399-419 (HLLFGIALFAAQIYLLLTQMH) traverse the membrane as a helical segment. Residues 420–431 (HTNTPSMVNKIS) are Cytoplasmic-facing. Residues 432–452 (FYCFSMINLVDGSLATLYFVA) traverse the membrane as a helical segment. Residues 453–458 (ASVVPE) lie on the Lumenal side of the membrane. Residues 459-479 (LYLPLVISAFSCFILASIFEI) form a helical membrane-spanning segment. The Cytoplasmic portion of the chain corresponds to 480–523 (RYLISIYASQVNEQNVGIINLLRGNTGTYDENRPRPAFIPDEGS). The helical transmembrane segment at 524–544 (IGGSLYGRFFFMLIIFTFLIL) threads the bilayer. Over 545-553 (SSTSWPRQL) the chain is Lumenal. Residues 554-574 (RMVFEYILIFILNSYWIPQIF) form a helical membrane-spanning segment. At 575–602 (RNAVKGIPSRRERARSSIGGNRSQNKMP) the chain is on the cytoplasmic side. The helical transmembrane segment at 603 to 623 (LLWSFVIGTTIIRSLPVVYVF) threads the bilayer. Topologically, residues 624–635 (TYSSNVFRHHKD) are lumenal. The chain crosses the membrane as a helical span at residues 636-656 (VHFVVFLSLWLLFQISILYSQ). At 657-758 (DVLGSRWFLP…PVCRSPLPPL (102 aa)) the chain is on the cytoplasmic side. An RING-type; atypical zinc finger spans residues 699-752 (CAICMSDVPIYIEEIPETHKVDQHSYMVTPCNHVFHTSCLENWMNYKLQCPVCR).

Component of the DSC E3 ligase complexes composed of at least TUL1, DSC2, DSC3, UBX3, CDC48 as well as VLD1 for the vacuole-localized complex or GLD1 for the Golgi/endosome-localized complex. Interacts with UBC4.

The protein resides in the golgi apparatus membrane. The enzyme catalyses S-ubiquitinyl-[E2 ubiquitin-conjugating enzyme]-L-cysteine + [acceptor protein]-L-lysine = [E2 ubiquitin-conjugating enzyme]-L-cysteine + N(6)-ubiquitinyl-[acceptor protein]-L-lysine.. The protein operates within protein modification; protein ubiquitination. In terms of biological role, catalytic component of the DSC E3 ubiquitin ligase complexes that tag proteins present in Golgi, endosome and vacuole membranes and function in protein homeostasis under non-stress conditions and support a role in protein quality control. Mediates ubiquitination of vacuolar proteins such as CPS1, PPN1, PEP12 and other proteins containing exposed hydrophilic residues within their transmembrane domains, leading to their sorting into internal vesicles in late endosomes. Targets also the unpalmitoylated endosomal SNARE TLG1 to the MVB pathway. This chain is Transmembrane E3 ubiquitin-protein ligase 1 (TUL1), found in Saccharomyces cerevisiae (strain ATCC 204508 / S288c) (Baker's yeast).